A 393-amino-acid polypeptide reads, in one-letter code: Phosphoglycerate kinase (393 aa).

Substrate-binding positions include 21–23 (DFN), Arg36, 59–62 (HLGR), Arg118, and Arg151. ATP contacts are provided by residues Lys201, Glu323, and 349–352 (GGDS).

Belongs to the phosphoglycerate kinase family. In terms of assembly, monomer.

It localises to the cytoplasm. It catalyses the reaction (2R)-3-phosphoglycerate + ATP = (2R)-3-phospho-glyceroyl phosphate + ADP. It participates in carbohydrate degradation; glycolysis; pyruvate from D-glyceraldehyde 3-phosphate: step 2/5. This is Phosphoglycerate kinase from Moorella thermoacetica (strain ATCC 39073 / JCM 9320).